A 509-amino-acid chain; its full sequence is GRAS family protein RAD1 (509 aa).

A GRAS domain is found at 125 to 508; that stretch reads EDGCADGMRL…KPIVAASCWK (384 aa). Residues 132–198 form a leucine repeat I (LRI) region; that stretch reads MRLVQLLIAC…IQPIGSGAGV (67 aa). The tract at residues 217–286 is VHIID; that stretch reads YRLVYETCPH…SGHGRVRRLR (70 aa). A VHIID motif is present at residues 248–252; the sequence is VHVVD. Residues 299-331 form a leucine repeat II (LRII) region; it reads AIGDELSDYANNLGINLEFSVVQKNLENLQPED. Residues 340–431 are PFYRE; the sequence is LVVNSILQLH…QFYFAEEIKN (92 aa). An SAW region spans residues 434-508; that stretch reads SCEGPLRMER…KPIVAASCWK (75 aa).

The protein belongs to the GRAS family. In terms of assembly, interacts with RAM1 and NSP2. Expressed in roots under low phosphate (Pi) conditions.

Its subcellular location is the nucleus. Functionally, transcription factor acting as a regulator of arbuscular mycorrhiza (AM)-related genes (e.g. PT4, STR and RAM2). Required for the morphogenesis of arbuscules upon symbiosis with AM fungi (e.g. Rhizophagus irregularis). Also involved in restricting mycorrhizal colonization of the root meristem. The chain is GRAS family protein RAD1 from Lotus japonicus (Lotus corniculatus var. japonicus).